The following is a 589-amino-acid chain: uncharacterized protein (589 aa).

5 helical membrane passes run 11 to 31 (LNWI…TMLA), 57 to 77 (LILM…FSVL), 97 to 117 (FWFF…HAIA), 190 to 210 (IEFT…GFNI), and 213 to 233 (GVVF…VWIG). In terms of domain architecture, ABC transmembrane type-1 spans 57 to 357 (LILMLLVLFI…FRLFYEQFTL (301 aa)). The ABC transporter domain maps to 390–587 (VALKNFGIKD…QLKLDVCLLC (198 aa)). Residue 423–430 (GASGTGKT) coordinates ATP.

It belongs to the ABC transporter superfamily.

The protein resides in the cell inner membrane. This is an uncharacterized protein from Haemophilus influenzae (strain ATCC 51907 / DSM 11121 / KW20 / Rd).